Consider the following 425-residue polypeptide: GTPase Obg (425 aa).

The region spanning 1–158 is the Obg domain; sequence MFRDSAKIYV…YSLILEMKMI (158 aa). An OBG-type G domain is found at 159–330; that stretch reads ADVGLVGYPN…LLYAVSETLK (172 aa). Residues 165-172, 190-194, 212-215, 282-285, and 311-313 each bind GTP; these read GYPNVGKS, FTTLV, DIPG, NKMD, and SAA. Mg(2+) contacts are provided by S172 and T192. The region spanning 348–425 is the OCT domain; sequence YKVQEEKPFE…IYDTEFDYTR (78 aa).

It belongs to the TRAFAC class OBG-HflX-like GTPase superfamily. OBG GTPase family. Monomer. Requires Mg(2+) as cofactor.

The protein resides in the cytoplasm. An essential GTPase which binds GTP, GDP and possibly (p)ppGpp with moderate affinity, with high nucleotide exchange rates and a fairly low GTP hydrolysis rate. Plays a role in control of the cell cycle, stress response, ribosome biogenesis and in those bacteria that undergo differentiation, in morphogenesis control. The polypeptide is GTPase Obg (Ruminiclostridium cellulolyticum (strain ATCC 35319 / DSM 5812 / JCM 6584 / H10) (Clostridium cellulolyticum)).